Here is a 487-residue protein sequence, read N- to C-terminus: NGFI-A-binding protein 1 (487 aa).

Residues 4-82 (ALPRTLGELQ…RDWVTNPGLF (79 aa)) are NCD1. Glycyl lysine isopeptide (Lys-Gly) (interchain with G-Cter in SUMO2) cross-links involve residues Lys-126, Lys-129, and Lys-143. The tract at residues 162–188 (QGHHATESEHSLSPADLGSPASPKESS) is disordered. Phosphoserine is present on residues Ser-172 and Ser-183. Lys-212 participates in a covalent cross-link: Glycyl lysine isopeptide (Lys-Gly) (interchain with G-Cter in SUMO2). An NCD2 region spans residues 221–310 (LLKTNKKLAK…ARQISREVTY (90 aa)). The tract at residues 307-338 (EVTYKYTYRTTKSKCGERDELSPKRIKVEDGF) is necessary for nuclear localization. At Ser-328 the chain carries Phosphoserine. A Glycyl lysine isopeptide (Lys-Gly) (interchain with G-Cter in SUMO1); alternate cross-link involves residue Lys-333. Residue Lys-333 forms a Glycyl lysine isopeptide (Lys-Gly) (interchain with G-Cter in SUMO2); alternate linkage. Glycyl lysine isopeptide (Lys-Gly) (interchain with G-Cter in SUMO2) cross-links involve residues Lys-355, Lys-369, and Lys-373. Residues 399-434 (YRQSSEEHSPNGLTSDNSDGQGERPLNLRMPNLQNR) are disordered. Ser-407 bears the Phosphoserine mark. Residues 409–418 (NGLTSDNSDG) show a composition bias toward polar residues. Glycyl lysine isopeptide (Lys-Gly) (interchain with G-Cter in SUMO2) cross-links involve residues Lys-454, Lys-465, and Lys-477. Residue Lys-480 forms a Glycyl lysine isopeptide (Lys-Gly) (interchain with G-Cter in SUMO1); alternate linkage. Lys-480 is covalently cross-linked (Glycyl lysine isopeptide (Lys-Gly) (interchain with G-Cter in SUMO2); alternate).

It belongs to the NAB family. In terms of assembly, homomultimers may associate with EGR1 bound to DNA. As to expression, isoform Short is found in myeloid leukemia cell line KG-1.

Its subcellular location is the nucleus. Acts as a transcriptional repressor for zinc finger transcription factors EGR1 and EGR2. In Homo sapiens (Human), this protein is NGFI-A-binding protein 1 (NAB1).